Here is a 509-residue protein sequence, read N- to C-terminus: Ribonuclease Y (509 aa).

A helical transmembrane segment spans residues 3–23; that stretch reads IIFSSIFAGFILGFLIRVFLG. The KH domain maps to 197-257; the sequence is TVASVELPND…IRKELAKRTL (61 aa). In terms of domain architecture, HD spans 323–418; it reads VLSHSKETAI…VQIADAISAS (96 aa).

It belongs to the RNase Y family.

It is found in the cell membrane. Endoribonuclease that initiates mRNA decay. The chain is Ribonuclease Y from Borreliella afzelii (strain PKo) (Borrelia afzelii).